The chain runs to 440 residues: DNA dC-&gt;dU-editing enzyme APOBEC-3 (440 aa).

2 consecutive CMP/dCMP-type deaminase domains span residues 49 to 165 and 249 to 368; these read GRKD…AQVA and EEEF…LCSL. His-82 is a binding site for Zn(2+). The active-site Proton donor is the Glu-84. Zn(2+) is bound by residues Cys-116, Cys-119, His-299, Cys-327, and Cys-330.

It belongs to the cytidine and deoxycytidylate deaminase family. Homodimer. Interacts with mouse mammary tumor virus (MMTV) nucleocapsid protein p14. Zn(2+) is required as a cofactor. In terms of tissue distribution, expressed in spleen, node and lung.

It is found in the cytoplasm. The catalysed reaction is a 2'-deoxycytidine in single-stranded DNA + H2O + H(+) = a 2'-deoxyuridine in single-stranded DNA + NH4(+). In terms of biological role, DNA deaminase (cytidine deaminase) which acts as an inhibitor of retrovirus replication and retrotransposon mobility via deaminase-dependent and -independent mechanisms. Selectively targets single-stranded DNA and does not deaminate double-stranded DNA or single- or double-stranded RNA. Exhibits antiviral activity against HIV-1, simian immunodeficiency viruses (SIVs), mouse mammary tumor virus (MMTV) and friend murine leukemia virus (FrMLV) and may inhibit the mobility of LTR retrotransposons. The chain is DNA dC-&gt;dU-editing enzyme APOBEC-3 (Apobec3) from Mus musculus (Mouse).